The following is a 163-amino-acid chain: Carbon monoxide dehydrogenase small chain (163 aa).

A 2Fe-2S ferredoxin-type domain is found at 4–80 (KIITVNVNGK…GSEVLTVEGL (77 aa)). [2Fe-2S] cluster-binding residues include C42, C47, C50, C62, C101, C104, C136, and C138.

As to quaternary structure, dimer of heterotrimers. Each heterotrimer consists of a large, a medium and a small subunit. The cofactor is [2Fe-2S] cluster.

The catalysed reaction is CO + a quinone + H2O = a quinol + CO2. Its function is as follows. Catalyzes the oxidation of carbon monoxide to carbon dioxide. The polypeptide is Carbon monoxide dehydrogenase small chain (cutS) (Hydrogenophaga pseudoflava (Pseudomonas carboxydoflava)).